The chain runs to 135 residues: Small ribosomal subunit protein uS9 (135 aa).

A compositionally biased stretch (basic and acidic residues) spans Val-108–Lys-118. A disordered region spans residues Val-108–Arg-135. A compositionally biased stretch (basic residues) spans Pro-119–Arg-135.

Belongs to the universal ribosomal protein uS9 family. As to quaternary structure, part of the 30S ribosomal subunit.

The sequence is that of Small ribosomal subunit protein uS9 from Thermococcus kodakarensis (strain ATCC BAA-918 / JCM 12380 / KOD1) (Pyrococcus kodakaraensis (strain KOD1)).